Here is a 296-residue protein sequence, read N- to C-terminus: Cytidine deaminase (296 aa).

CMP/dCMP-type deaminase domains lie at 52–172 and 191–296; these read TAVE…FGPK and THAD…YFAL. A substrate-binding site is contributed by 93 to 95; that stretch reads NQE. H106 is a binding site for Zn(2+). E108 functions as the Proton donor in the catalytic mechanism. Zn(2+)-binding residues include C133 and C136.

This sequence belongs to the cytidine and deoxycytidylate deaminase family. Homodimer. Zn(2+) is required as a cofactor.

The enzyme catalyses cytidine + H2O + H(+) = uridine + NH4(+). The catalysed reaction is 2'-deoxycytidine + H2O + H(+) = 2'-deoxyuridine + NH4(+). In terms of biological role, this enzyme scavenges exogenous and endogenous cytidine and 2'-deoxycytidine for UMP synthesis. The protein is Cytidine deaminase of Actinobacillus succinogenes (strain ATCC 55618 / DSM 22257 / CCUG 43843 / 130Z).